The sequence spans 73 residues: MMSKLRVLLTICLLLFPLSALPLDGDQPADQPAKRMWNGKLAARKPRFDKYDLVRGCCPPQWCGPDCTSPCCG.

Residues 1 to 20 form the signal peptide; the sequence is MMSKLRVLLTICLLLFPLSA. Positions 21–55 are excised as a propeptide; the sequence is LPLDGDQPADQPAKRMWNGKLAARKPRFDKYDLVR. 4-hydroxyproline is present on residues Pro59, Pro60, Pro65, and Pro70. Cys72 is subject to Cysteine amide.

Contains 3 disulfide bonds. In terms of tissue distribution, expressed by the venom duct.

The protein resides in the secreted. The protein is Conotoxin reg3a of Conus regius (Crown cone).